The chain runs to 259 residues: AM-toxin biosynthesis protein 11 (259 aa).

The tract at residues 39–66 is disordered; the sequence is RRSRRRPEEESIQSLSKHVSTTTQPCPT. Over residues 50 to 64 the composition is skewed to polar residues; the sequence is IQSLSKHVSTTTQPC.

It functions in the pathway mycotoxin biosynthesis. Functionally, part of the gene clusters that mediate the biosynthesis of AM-toxins, host-selective toxins (HSTs) causing Alternaria blotch on apple, a worldwide distributed disease. AM-toxins are cyclic depsipeptides containing the 3 residues 2-hydroxy-isovaleric acid (2-HIV), dehydroalanine, L-alanine which are common for all 3 AM-toxins I to III. The fourth precursor is L-alpha-amino-methoxyphenyl-valeric acid (L-Amv) for AM-toxin I, L-alpha-amino-phenyl-valeric acid (L-Apv) for AM-toxin II, and L-alpha-amino-hydroxyphenyl-valeric acid (L-Ahv) for AM-toxin III. AM-toxins have two target sites for affecting susceptible apple cells; they cause invagination of the plasma membrane and electrolyte loss and chloroplast disorganization. The non-ribosomal peptide synthetase AMT1 contains 4 catalytic modules and is responsible for activation of each residue in AM-toxin. The aldo-keto reductase AMT2 catalyzes the conversion of 2-keto-isovaleric acid (2-KIV) to 2-hydroxy-isovaleric acid (2-HIV), one of the precursor residues incorporated by AMT1 during AM-toxin biosynthesis, by reduction of its ketone to an alcohol. The cytochrome P450 monooxygenase AMT3 and the thioesterase AMT4 are also important for AM-toxin production, but their exact function within the AM-toxin biosynthesis are not known yet. Up to 21 proteins (including AMT1 to AMT4) are predicted to be involved in AM-toxin biosynthesis since their expression ishighly up-regulated in AM-toxin-producing cultures. The protein is AM-toxin biosynthesis protein 11 of Alternaria alternata (Alternaria rot fungus).